A 342-amino-acid chain; its full sequence is Autoinducer 2 import system permease protein LsrC (342 aa).

The Periplasmic segment spans residues 1–13; sequence MLKFIQNNREITA. Residues 14 to 34 form a helical membrane-spanning segment; the sequence is LLAVLLLFVLPGFLDRQYLSV. Residues 35–38 lie on the Cytoplasmic side of the membrane; sequence QTLT. The chain crosses the membrane as a helical span at residues 39-59; the sequence is MVYSSAQILILLAMGATLVML. Topologically, residues 60 to 69 are periplasmic; the sequence is TRNIDVSVGS. Residues 70–90 form a helical membrane-spanning segment; sequence ITGMCAVLLGMLLNAGYSLPV. The Cytoplasmic portion of the chain corresponds to 91–92; the sequence is AC. Residues 93 to 113 form a helical membrane-spanning segment; it reads VATLLLGLLAGFFNGVLVAWL. Residue lysine 114 is a topological domain, periplasmic. The helical transmembrane segment at 115–135 threads the bilayer; it reads IPAIVATLGTLGLYRGIMLLW. The Cytoplasmic segment spans residues 136 to 154; it reads TGGKWIEGLPAELKQLSAP. A helical transmembrane segment spans residues 155–175; it reads LLLGVSAIGWLTIILVAFMAW. The Periplasmic portion of the chain corresponds to 176 to 212; that stretch reads LLAKTAFGRSFYATGDNLQGARQLGVRTEAIRIVAFS. The chain crosses the membrane as a helical span at residues 213-233; it reads LNGCMAALAGIVFASQIGFIP. Over 234 to 251 the chain is Cytoplasmic; the sequence is NQTGTGLEMKAIAACVLG. A helical membrane pass occupies residues 252–272; the sequence is GISLLGGSGAIIGAVLGAWFL. At 273 to 283 the chain is on the periplasmic side; the sequence is TQIDSVLVLLR. A helical transmembrane segment spans residues 284–304; the sequence is IPAWWNDFIAGLVLLAVLVFD. The Cytoplasmic segment spans residues 305 to 342; the sequence is GRLRCALELNLRRQKYARFMTPPPSVKPASSGKKREAA.

This sequence belongs to the binding-protein-dependent transport system permease family. AraH/RbsC subfamily. In terms of assembly, the complex is composed of two ATP-binding proteins (LsrA), two transmembrane proteins (LsrC and LsrD) and a solute-binding protein (LsrB).

The protein resides in the cell inner membrane. In terms of biological role, part of the ABC transporter complex LsrABCD involved in autoinducer 2 (AI-2) import. Probably responsible for the translocation of the substrate across the membrane. This Escherichia coli O157:H7 protein is Autoinducer 2 import system permease protein LsrC (lsrC).